We begin with the raw amino-acid sequence, 1241 residues long: RNA polymerase II C-terminal domain phosphatase-like 3 (1241 aa).

Disordered regions lie at residues 361–402 (DHDA…TTEG), 428–470 (VFKT…HLIY), 505–525 (ISAP…RDPR), 578–598 (KRQK…WLED), 677–702 (AIQK…VSTP), 720–800 (VLQD…QNGT), and 852–885 (TERD…GPTR). Residues 368 to 378 (PSPTRETTPSL) show a composition bias toward polar residues. A compositionally biased stretch (low complexity) spans 441–466 (GEPNDGNGDVGGEVSSSVVKSSNPGS). Residues 677–686 (AIQKPMDPRR) are compositionally biased toward basic and acidic residues. Polar residues-rich tracts occupy residues 691–702 (PGSSVQPGVSTP) and 791–800 (PRQNISQNGT). Residues 871–881 (SVSAASVTAAA) show a composition bias toward low complexity. An FCP1 homology domain is found at 923–1103 (FASQKLSLVL…GLLGPSLLEL (181 aa)). Residues 1146-1239 (EQRKILAGCR…QRANENLYAI (94 aa)) form the BRCT domain.

As to quaternary structure, interacts with RAP74. Mg(2+) is required as a cofactor. Co(2+) serves as cofactor. The cofactor is Mn(2+).

Its subcellular location is the nucleus. It carries out the reaction O-phospho-L-seryl-[protein] + H2O = L-seryl-[protein] + phosphate. The catalysed reaction is O-phospho-L-threonyl-[protein] + H2O = L-threonyl-[protein] + phosphate. Completely dephosphorylates 'Ser-2', and partially 'Ser-5' and 'Ser-7' of the heptad repeats YSPTSPS in the C-terminal domain (CTD) of the largest RNA polymerase II subunit (RPB1). Involved in defense response. Acts as a negative regulator of immune gene expression and immunity to pathogen infections. Preferentially dephosphorylates 'Ser-2' of RNA polymerase II CTD. This counterregulates the MAP kinase (MAPK) or cyclin-dependent kinase C (CDKC)-mediated phosphorylation of CTD in response to pathogens and upon perception of microbe-associated molecular patterns (MAMPs). MAPKs phosphorylate and activate CDKCs, which are CTD kinases that positively regulate plant innate immunity. Acts as a negative regulator of stress gene transcription involved in abscisic acid (ABA) mediated signaling pathway and cold resistance. Acts as a post-transcriptional gene silencing (PTGS) suppressor. The chain is RNA polymerase II C-terminal domain phosphatase-like 3 from Arabidopsis thaliana (Mouse-ear cress).